The sequence spans 450 residues: Phosphoglucosamine mutase (450 aa).

Serine 101 serves as the catalytic Phosphoserine intermediate. 4 residues coordinate Mg(2+): serine 101, aspartate 240, aspartate 242, and aspartate 244. Residue serine 101 is modified to Phosphoserine.

This sequence belongs to the phosphohexose mutase family. It depends on Mg(2+) as a cofactor. Activated by phosphorylation.

The enzyme catalyses alpha-D-glucosamine 1-phosphate = D-glucosamine 6-phosphate. Its function is as follows. Catalyzes the conversion of glucosamine-6-phosphate to glucosamine-1-phosphate. This is Phosphoglucosamine mutase from Streptococcus sanguinis (strain SK36).